The following is a 429-amino-acid chain: Glutamate dehydrogenase B (429 aa).

The segment at 1 to 20 (MAQTPPPESAPSTDSEPETA) is disordered. K119 is a catalytic residue.

The protein belongs to the Glu/Leu/Phe/Val dehydrogenases family. As to quaternary structure, homohexamer.

The sequence is that of Glutamate dehydrogenase B (gdhB) from Halobacterium salinarum (strain ATCC 700922 / JCM 11081 / NRC-1) (Halobacterium halobium).